The chain runs to 183 residues: Small ribosomal subunit protein uS4c (183 aa).

The S4 RNA-binding domain maps to 82 to 143 (MRLDNILFRL…KQRSKALIQN (62 aa)).

This sequence belongs to the universal ribosomal protein uS4 family. As to quaternary structure, part of the 30S ribosomal subunit. Contacts protein S5. The interaction surface between S4 and S5 is involved in control of translational fidelity.

The protein resides in the plastid. It localises to the chloroplast. Its function is as follows. One of the primary rRNA binding proteins, it binds directly to 16S rRNA where it nucleates assembly of the body of the 30S subunit. With S5 and S12 plays an important role in translational accuracy. The sequence is that of Small ribosomal subunit protein uS4c (rps4) from Aristea capitata.